We begin with the raw amino-acid sequence, 96 residues long: Co-chaperonin GroES (96 aa).

Belongs to the GroES chaperonin family. As to quaternary structure, heptamer of 7 subunits arranged in a ring. Interacts with the chaperonin GroEL.

It is found in the cytoplasm. Functionally, together with the chaperonin GroEL, plays an essential role in assisting protein folding. The GroEL-GroES system forms a nano-cage that allows encapsulation of the non-native substrate proteins and provides a physical environment optimized to promote and accelerate protein folding. GroES binds to the apical surface of the GroEL ring, thereby capping the opening of the GroEL channel. This chain is Co-chaperonin GroES, found in Buchnera aphidicola subsp. Schizaphis graminum (strain Sg).